A 63-amino-acid chain; its full sequence is Alpha-conotoxin-like PuSG1.2 (63 aa).

Positions 1-21 (MRCLALLVVTLLLFTATATTG) are cleaved as a signal peptide. Positions 22–43 (ASNGMNAAASGEAPDSISLAVR) are excised as a propeptide. 2 cysteine pairs are disulfide-bonded: Cys-46-Cys-52 and Cys-47-Cys-60. The lacks the Ser-Xaa-Pro motif that is crucial for potent interaction with nAChR stretch occupies residues 48-50 (PDP).

It belongs to the conotoxin A superfamily. In terms of tissue distribution, expressed by the salivary gland.

It localises to the secreted. Functionally, alpha-conopeptides-like may act on postsynaptic membranes, they bind to the nicotinic acetylcholine receptors (nAChR) and thus inhibit them. Has possibly a distinct nAChR binding mode from other alpha-conotoxins, due to a different three residue motif (lacks the Ser-Xaa-Pro motif). The sequence is that of Alpha-conotoxin-like PuSG1.2 from Conus pulicarius (Flea-bitten cone).